The primary structure comprises 392 residues: Formate-dependent phosphoribosylglycinamide formyltransferase (392 aa).

Residues 22 to 23 and Glu-82 contribute to the N(1)-(5-phospho-beta-D-ribosyl)glycinamide site; that span reads EL. ATP-binding positions include Arg-114, Lys-155, 160-165, 195-198, and Glu-203; these read SSGKGQ and EGVV. One can recognise an ATP-grasp domain in the interval 119–308; it reads RLAAEELGLP…EFALHVRAFL (190 aa). Glu-267 and Glu-279 together coordinate Mg(2+). N(1)-(5-phospho-beta-D-ribosyl)glycinamide contacts are provided by residues Asp-286, Lys-355, and 362 to 363; that span reads RR.

The protein belongs to the PurK/PurT family. Homodimer.

It carries out the reaction N(1)-(5-phospho-beta-D-ribosyl)glycinamide + formate + ATP = N(2)-formyl-N(1)-(5-phospho-beta-D-ribosyl)glycinamide + ADP + phosphate + H(+). Its pathway is purine metabolism; IMP biosynthesis via de novo pathway; N(2)-formyl-N(1)-(5-phospho-D-ribosyl)glycinamide from N(1)-(5-phospho-D-ribosyl)glycinamide (formate route): step 1/1. Its function is as follows. Involved in the de novo purine biosynthesis. Catalyzes the transfer of formate to 5-phospho-ribosyl-glycinamide (GAR), producing 5-phospho-ribosyl-N-formylglycinamide (FGAR). Formate is provided by PurU via hydrolysis of 10-formyl-tetrahydrofolate. In Salmonella dublin (strain CT_02021853), this protein is Formate-dependent phosphoribosylglycinamide formyltransferase.